A 149-amino-acid chain; its full sequence is D-aminoacyl-tRNA deacylase (149 aa).

Positions 137–138 match the Gly-cisPro motif, important for rejection of L-amino acids motif; it reads GP.

The protein belongs to the DTD family. Homodimer.

The protein localises to the cytoplasm. The catalysed reaction is glycyl-tRNA(Ala) + H2O = tRNA(Ala) + glycine + H(+). It carries out the reaction a D-aminoacyl-tRNA + H2O = a tRNA + a D-alpha-amino acid + H(+). Its function is as follows. An aminoacyl-tRNA editing enzyme that deacylates mischarged D-aminoacyl-tRNAs. Also deacylates mischarged glycyl-tRNA(Ala), protecting cells against glycine mischarging by AlaRS. Acts via tRNA-based rather than protein-based catalysis; rejects L-amino acids rather than detecting D-amino acids in the active site. By recycling D-aminoacyl-tRNA to D-amino acids and free tRNA molecules, this enzyme counteracts the toxicity associated with the formation of D-aminoacyl-tRNA entities in vivo and helps enforce protein L-homochirality. The polypeptide is D-aminoacyl-tRNA deacylase (Clostridium tetani (strain Massachusetts / E88)).